The sequence spans 208 residues: Methylthioribulose-1-phosphate dehydratase (208 aa).

Residues histidine 99 and histidine 101 each contribute to the Zn(2+) site.

It belongs to the aldolase class II family. MtnB subfamily. Zn(2+) is required as a cofactor.

It carries out the reaction 5-(methylsulfanyl)-D-ribulose 1-phosphate = 5-methylsulfanyl-2,3-dioxopentyl phosphate + H2O. The protein operates within amino-acid biosynthesis; L-methionine biosynthesis via salvage pathway; L-methionine from S-methyl-5-thio-alpha-D-ribose 1-phosphate: step 2/6. Catalyzes the dehydration of methylthioribulose-1-phosphate (MTRu-1-P) into 2,3-diketo-5-methylthiopentyl-1-phosphate (DK-MTP-1-P). The sequence is that of Methylthioribulose-1-phosphate dehydratase from Aquifex aeolicus (strain VF5).